Here is a 447-residue protein sequence, read N- to C-terminus: Polyamine export protein (447 aa).

The Cytoplasmic portion of the chain corresponds to 1 to 4 (MLNS). In terms of domain architecture, CNNM transmembrane spans 1-197 (MLNSIFIIFC…ALAGVLRKQE (197 aa)). Residues 5–25 (IFIIFCLIAVSAFFSISEISL) form a helical membrane-spanning segment. The Periplasmic portion of the chain corresponds to 26 to 54 (AASRKIKLKLLADEGSINAQRVLKMQENP). The chain crosses the membrane as a helical span at residues 55–75 (GMFFTVVQIGLNAVAILGGIV). The Cytoplasmic segment spans residues 76-99 (GDAAFSPAFSALFSHYMSPELSEQ). The helical transmembrane segment at 100–120 (LSFILSFSLVTGLFILFADLT) threads the bilayer. Topologically, residues 121-141 (PKRIGMIAPEAVALRIINPMR) are periplasmic. The chain crosses the membrane as a helical span at residues 142–162 (FCLFVFRPLVWLFNGMANNIF). Over 163–447 (RLFKIPMVRK…DAQGKEDSAA (285 aa)) the chain is Cytoplasmic. CBS domains are found at residues 216-275 (MTSR…NQSM) and 282-343 (QIRN…GLEE).

The protein belongs to the UPF0053 family. PaeA subfamily.

It localises to the cell inner membrane. Functionally, involved in cadaverine and putrescine tolerance in stationary phase. May facilitate the efflux of both cadaverine and putrescine from the cytoplasm, reducing potentially toxic levels under certain stress conditions. In Salmonella typhimurium (strain 14028s / SGSC 2262), this protein is Polyamine export protein.